A 296-amino-acid polypeptide reads, in one-letter code: uncharacterized protein (296 aa).

The HTH lysR-type domain occupies Met1–Thr60. A DNA-binding region (H-T-H motif) is located at residues Phe20–Ser39.

The protein belongs to the LysR transcriptional regulatory family.

This is an uncharacterized protein from Methanocaldococcus jannaschii (strain ATCC 43067 / DSM 2661 / JAL-1 / JCM 10045 / NBRC 100440) (Methanococcus jannaschii).